Consider the following 584-residue polypeptide: 2-succinyl-5-enolpyruvyl-6-hydroxy-3-cyclohexene-1-carboxylate synthase (584 aa).

This sequence belongs to the TPP enzyme family. MenD subfamily. Homodimer. It depends on Mg(2+) as a cofactor. Mn(2+) is required as a cofactor. Requires thiamine diphosphate as cofactor.

The enzyme catalyses isochorismate + 2-oxoglutarate + H(+) = 5-enolpyruvoyl-6-hydroxy-2-succinyl-cyclohex-3-ene-1-carboxylate + CO2. The protein operates within quinol/quinone metabolism; 1,4-dihydroxy-2-naphthoate biosynthesis; 1,4-dihydroxy-2-naphthoate from chorismate: step 2/7. It functions in the pathway quinol/quinone metabolism; menaquinone biosynthesis. In terms of biological role, catalyzes the thiamine diphosphate-dependent decarboxylation of 2-oxoglutarate and the subsequent addition of the resulting succinic semialdehyde-thiamine pyrophosphate anion to isochorismate to yield 2-succinyl-5-enolpyruvyl-6-hydroxy-3-cyclohexene-1-carboxylate (SEPHCHC). The polypeptide is 2-succinyl-5-enolpyruvyl-6-hydroxy-3-cyclohexene-1-carboxylate synthase (Bacillus thuringiensis subsp. konkukian (strain 97-27)).